A 212-amino-acid chain; its full sequence is ATP phosphoribosyltransferase (212 aa).

Belongs to the ATP phosphoribosyltransferase family. Short subfamily. As to quaternary structure, heteromultimer composed of HisG and HisZ subunits.

Its subcellular location is the cytoplasm. The enzyme catalyses 1-(5-phospho-beta-D-ribosyl)-ATP + diphosphate = 5-phospho-alpha-D-ribose 1-diphosphate + ATP. The protein operates within amino-acid biosynthesis; L-histidine biosynthesis; L-histidine from 5-phospho-alpha-D-ribose 1-diphosphate: step 1/9. Functionally, catalyzes the condensation of ATP and 5-phosphoribose 1-diphosphate to form N'-(5'-phosphoribosyl)-ATP (PR-ATP). Has a crucial role in the pathway because the rate of histidine biosynthesis seems to be controlled primarily by regulation of HisG enzymatic activity. This is ATP phosphoribosyltransferase from Prochlorococcus marinus (strain AS9601).